The primary structure comprises 250 residues: PTB-containing, cubilin and LRP1-interacting protein (250 aa).

The PID domain occupies 93 to 250 (VTYLGKVSTT…VSQELESDDG (158 aa)). The segment at 229-250 (DGRIHSNSSSEEVSQELESDDG) is disordered. Phosphoserine occurs at positions 236 and 247. The segment covering 241-250 (VSQELESDDG) has biased composition (acidic residues).

As to quaternary structure, found in a complex with PID1/PCLI1, LRP1 and CUBNI. Interacts with LRP1 and CUBN. As to expression, expressed in subcutaneous fat, heart, skeletal muscle, brain, colon, thymus, spleen, kidney, liver, small intestine, placenta, lung and peripheral blood leukocyte.

The protein resides in the cytoplasm. Functionally, increases proliferation of preadipocytes without affecting adipocytic differentiation. The chain is PTB-containing, cubilin and LRP1-interacting protein (PID1) from Homo sapiens (Human).